Here is a 75-residue protein sequence, read N- to C-terminus: Kappa-conotoxin RIIIK (75 aa).

The N-terminal stretch at 1 to 19 is a signal peptide; it reads MSKLGVLLTICLLLFPLTA. Residues 20–50 constitute a propeptide that is removed on maturation; the sequence is LPMDGDQPVDRLAERMQDNISSEQHTFFEKR. Residues P52, P63, P65, and P71 each carry the 4-hydroxyproline modification. Intrachain disulfides connect C54-C67, C55-C72, and C62-C73. The residue at position 74 (T74) is a Threonine amide.

Belongs to the conotoxin M superfamily. In terms of tissue distribution, expressed by the venom duct.

The protein localises to the secreted. In terms of biological role, kappa-conotoxins inhibits voltage-gated potassium channels (Kv). This synthetic toxin reversibly inhibits the insect potassium channel Shaker K+, the teleost homolog TSha1 and the mammalian Kv1.2/KCNA2 channel. Interacts with the pore region of the insect channel, in a state-dependent manner. Causes seizure when intracerebrovascularly injected into mice. Is also toxic when intrathecally injected into mice, but shows no visible effects by intraperitoneal injection. Shows protective effects on cardiac tissue when administered after an ischemic event. This is Kappa-conotoxin RIIIK from Conus radiatus (Rayed cone).